A 490-amino-acid chain; its full sequence is MEIILVTLCLTTLLALLLLKSILKRTTTNNLNLPPSPWRLPVIGNLHQLSLNTHRSLRSLSLRYGPLMLLHFGRTPVLIVSSADVAHDILKTYDVICANRPKTKVIDKILRGGRDVAFAPYGEYWKQMKSICIQNLLSNKMVRSYKKIREDEIKLMIEKVENASSCSPPSPVNLSQLFMTLTNDIICRAALGRKYSSKEDGIDVENIVRAFSALVGEFPIGEYIPSLSWIDKIRGQDHKMEEVDKRFDEFLERVVKEHEDANKDTRSDLVDTLLTIQSDKSALKLIIWDMFLAGTATSLSFLEWAMTELMRNPKVMKKLQEEIRSSSRQGLFVTEKEAEKMDYLQAVIKEALRLRPPAPLMVPRVFSEDVTLKGYNIPAGTQVIINAWAIQRDTTTWGIDAEEFRPERHLDSILDFQGQDFKFIPFGSGKRICPGIGFTSALIGVTLANIVKRFNWRMDVEPQRVQHDLTEATGLVVFRKFPLIAIPSSA.

A helical membrane pass occupies residues 3–23; that stretch reads IILVTLCLTTLLALLLLKSIL. Cys-433 contacts heme.

It belongs to the cytochrome P450 family. The cofactor is heme.

It localises to the membrane. The protein is Cytochrome P450 71A19 (CYP71A19) of Arabidopsis thaliana (Mouse-ear cress).